Here is a 705-residue protein sequence, read N- to C-terminus: Dolichyl-diphosphooligosaccharide--protein glycosyltransferase subunit STT3A (705 aa).

Over 1-17 the chain is Cytoplasmic; it reads MTKFGFLRLSYEKQDTL. The helical transmembrane segment at 18–38 threads the bilayer; sequence LKLLILSMAAVLSFSTRLFAV. Over 39 to 119 the chain is Lumenal; sequence LRFESVIHEF…IDIRNVCVFL (81 aa). The short motif at 47-49 is the DXD motif 1 element; it reads EFD. Residue aspartate 49 coordinates Mn(2+). Residues 120-138 traverse the membrane as a helical segment; sequence APLFSSFTTIVTYHLTKEL. At 139 to 140 the chain is on the cytoplasmic side; the sequence is KD. Residues 141–158 form a helical membrane-spanning segment; that stretch reads AGAGLLAAAMIAVVPGYI. At 159 to 169 the chain is on the lumenal side; the sequence is SRSVAGSYDNE. Mn(2+)-binding residues include aspartate 167 and glutamate 169. A DXD motif 2 motif is present at residues 167–169; the sequence is DNE. The helical transmembrane segment at 170–189 threads the bilayer; the sequence is GIAIFCMLLTYYMWIKAVKT. At 190–191 the chain is on the cytoplasmic side; the sequence is GS. The helical transmembrane segment at 192–206 threads the bilayer; that stretch reads ICWAAKCALAYFYMV. The Lumenal portion of the chain corresponds to 207–211; the sequence is SSWGG. Residues 212–228 traverse the membrane as a helical segment; it reads YVFLINLIPLHVLVLML. Topologically, residues 229–233 are cytoplasmic; the sequence is TGRFS. The helical transmembrane segment at 234 to 259 threads the bilayer; that stretch reads HRIYVAYCTVYCLGTILSMQISFVGF. Over 260–267 the chain is Lumenal; it reads QPVLSSEH. A helical transmembrane segment spans residues 268–287; it reads MAAFGVFGLCQIHAFVDYLR. At 288–300 the chain is on the cytoplasmic side; the sequence is SKLNPQQFEVLFR. A helical transmembrane segment spans residues 301–321; it reads SVISLVGFVLLTVGALLMLTG. The Lumenal segment spans residues 322–356; it reads KISPWTGRFYSLLDPSYAKNNIPIIASVSEHQPTT. Positions 348–351 match the SVSE motif motif; that stretch reads SVSE. A helical membrane pass occupies residues 357 to 379; that stretch reads WSSYYFDLQLLVFMFPVGLYYCF. Residues 380–385 are Cytoplasmic-facing; sequence SNLSDA. A helical transmembrane segment spans residues 386–402; the sequence is RIFIIMYGVTSMYFSAV. Residues 403–406 lie on the Lumenal side of the membrane; that stretch reads MVRL. Arginine 405 contacts dolichyl diphosphooligosaccharide. Residues 407–428 traverse the membrane as a helical segment; the sequence is MLVLAPVMCILSGIGVSQVLST. At 429–453 the chain is on the cytoplasmic side; that stretch reads YMKNLDISRPDKKSKKQQDSTYPIK. Residues 454–473 traverse the membrane as a helical segment; sequence NEVASGMILVMAFFLITYTF. At 474 to 705 the chain is on the lumenal side; the sequence is HSTWVTSEAY…DLDNRGLSRT (232 aa). Residues 525-527 are interacts with target acceptor peptide in protein substrate; the sequence is WWD. Positions 525 to 529 match the WWDYG motif motif; it reads WWDYG. Tyrosine 530 serves as a coordination point for dolichyl diphosphooligosaccharide. N-linked (GlcNAc...) asparagine glycans are attached at residues asparagine 537 and asparagine 544. The N-linked (GlcNAc...) (high mannose) asparagine glycan is linked to asparagine 548. Residues 592–599 carry the DK motif motif; the sequence is DINKFLWM.

Belongs to the STT3 family. Component of the oligosaccharyltransferase (OST) complex. There are 2 OST complexes, OST-A and OST-B, which contain STT3A or STT3B as catalytic subunit, respectively. OST-A and OST-B contain common core subunits RPN1, RPN2, OST48, OST4, DAD1 and TMEM258, and OST-A contains DC2/OSTC and KRTCAP2/KCP2 specific accessory subunits. OST-A complex assembly occurs through the formation of 3 subcomplexes. Subcomplex 1 contains RPN1 and TMEM258, subcomplex 2 contains the OST-A-specific subunits STT3A, DC2/OSTC, and KCP2 as well as the core subunit OST4, and subcomplex 3 contains RPN2, DAD1, and OST48. The OST-A complex can form stable complexes with the Sec61 complex or with both the Sec61 and TRAP complexes. The cofactor is Mg(2+). Requires Mn(2+) as cofactor. Expressed at high levels in placenta, liver, muscle and pancreas, and at very low levels in brain, lung and kidney. Expressed in skin fibroblasts (at protein level).

It is found in the endoplasmic reticulum. The protein resides in the endoplasmic reticulum membrane. It catalyses the reaction a di-trans,poly-cis-dolichyl diphosphooligosaccharide + L-asparaginyl-[protein] = N(4)-(oligosaccharide-(1-&gt;4)-N-acetyl-beta-D-glucosaminyl-(1-&gt;4)-N-acetyl-beta-D-glucosaminyl)-L-asparaginyl-[protein] + a di-trans,poly-cis-dolichyl diphosphate + H(+). It participates in protein modification; protein glycosylation. Its activity is regulated as follows. STT3A, but not STT3B, is specifically inhibited by the N-glycosylation inhibitor NGI-235, which prevents productive binding pose of the glycan donor in the active site of STT3A. Catalytic subunit of the oligosaccharyl transferase (OST) complex that catalyzes the initial transfer of a defined glycan (Glc(3)Man(9)GlcNAc(2) in eukaryotes) from the lipid carrier dolichol-pyrophosphate to an asparagine residue within an Asn-X-Ser/Thr consensus motif in nascent polypeptide chains, the first step in protein N-glycosylation. N-glycosylation occurs cotranslationally and the complex associates with the Sec61 complex at the channel-forming translocon complex that mediates protein translocation across the endoplasmic reticulum (ER). All subunits are required for a maximal enzyme activity. This subunit contains the active site and the acceptor peptide and donor lipid-linked oligosaccharide (LLO) binding pockets. STT3A is present in the majority of OST complexes and mediates cotranslational N-glycosylation of most sites on target proteins, while STT3B-containing complexes are required for efficient post-translational glycosylation and mediate glycosylation of sites that have been skipped by STT3A. STT3A-containing OST-A complex is also required to prevent hyperglycosylation of some target proteins by preventing glycosylation of facultative sites before folding of target proteins is completed. The polypeptide is Dolichyl-diphosphooligosaccharide--protein glycosyltransferase subunit STT3A (Homo sapiens (Human)).